Consider the following 252-residue polypeptide: Isoprenyl transferase (252 aa).

Aspartate 32 is an active-site residue. A Mg(2+)-binding site is contributed by aspartate 32. Residues 33–36 (GNGR), tryptophan 37, arginine 45, histidine 49, and 77–79 (STE) contribute to the substrate site. The active-site Proton acceptor is asparagine 80. Residues tryptophan 81, arginine 83, arginine 200, and 206-208 (RLS) each bind substrate. Residue glutamate 219 participates in Mg(2+) binding.

This sequence belongs to the UPP synthase family. As to quaternary structure, homodimer. The cofactor is Mg(2+).

Functionally, catalyzes the condensation of isopentenyl diphosphate (IPP) with allylic pyrophosphates generating different type of terpenoids. This chain is Isoprenyl transferase, found in Oceanobacillus iheyensis (strain DSM 14371 / CIP 107618 / JCM 11309 / KCTC 3954 / HTE831).